Reading from the N-terminus, the 41-residue chain is Augerpeptide-s11a (41 aa).

Contains 4 disulfide bonds. In terms of tissue distribution, expressed by the venom duct.

Its subcellular location is the secreted. Does not elicit any observable symptomatology in C.elegans. This is Augerpeptide-s11a from Terebra subulata (Chocolate spotted auger).